The chain runs to 432 residues: Adenosylhomocysteinase (432 aa).

S2 is subject to N-acetylserine. Residues T57, D131, and E156 each contribute to the substrate site. S183 carries the phosphoserine modification. Residues 183-350 are NAD binding; that stretch reads SVTKSKFDNL…EGRLVNLGCA (168 aa). Residues K186 and D190 each contribute to the substrate site. K186 is modified (N6-(2-hydroxyisobutyryl)lysine). The residue at position 193 (Y193) is a Phosphotyrosine.

Belongs to the adenosylhomocysteinase family. Homotetramer. Interaction with AHCYL1. NAD(+) serves as cofactor.

The protein resides in the cytoplasm. The protein localises to the melanosome. It is found in the nucleus. Its subcellular location is the endoplasmic reticulum. It catalyses the reaction S-adenosyl-L-homocysteine + H2O = L-homocysteine + adenosine. It functions in the pathway amino-acid biosynthesis; L-homocysteine biosynthesis; L-homocysteine from S-adenosyl-L-homocysteine: step 1/1. In terms of biological role, catalyzes the hydrolysis of S-adenosyl-L-homocysteine to form adenosine and homocysteine. Binds copper ions. This is Adenosylhomocysteinase (AHCY) from Bos taurus (Bovine).